A 230-amino-acid chain; its full sequence is Ubiquitin carboxyl-terminal hydrolase isozyme L3 (230 aa).

The region spanning 5-229 (RWLPLEANPE…LRFNAIALSA (225 aa)) is the UCH catalytic domain. The tract at residues 8–13 (PLEANP) is interaction with ubiquitin. C95 serves as the catalytic Nucleophile. S130 carries the post-translational modification Phosphoserine. Positions 152–159 (AHEGQTEA) are interaction with ubiquitin. Crossover loop which restricts access of large ubiquitin adducts to the active site. Residue H169 is the Proton donor of the active site. The interval 219-224 (ELRFNA) is interaction with ubiquitin.

The protein belongs to the peptidase C12 family. Preferentially binds diubiquitin; the interaction does not hydrolyze diubiquitin but, in vitro, inhibits the hydrolyzing activity on other substrates.

It is found in the cytoplasm. It catalyses the reaction Thiol-dependent hydrolysis of ester, thioester, amide, peptide and isopeptide bonds formed by the C-terminal Gly of ubiquitin (a 76-residue protein attached to proteins as an intracellular targeting signal).. With respect to regulation, inhibited by monoubiquitin and diubiquitin. Its function is as follows. Deubiquitinating enzyme (DUB) that controls levels of cellular ubiquitin through processing of ubiquitin precursors and ubiquitinated proteins. Thiol protease that recognizes and hydrolyzes a peptide bond at the C-terminal glycine of either ubiquitin or NEDD8. Has a 10-fold preference for Arg and Lys at position P3, and exhibits a preference towards 'Lys-48'-linked ubiquitin chains. Deubiquitinates ENAC in apical compartments, thereby regulating apical membrane recycling. Indirectly increases the phosphorylation of IGFIR, AKT and FOXO1 and promotes insulin-signaling and insulin-induced adipogenesis. Required for stress-response retinal, skeletal muscle and germ cell maintenance. May be involved in working memory. Can hydrolyze UBB(+1), a mutated form of ubiquitin which is not effectively degraded by the proteasome. The sequence is that of Ubiquitin carboxyl-terminal hydrolase isozyme L3 (UCHL3) from Sus scrofa (Pig).